The sequence spans 199 residues: Signal peptidase complex subunit 2 (199 aa).

Residues M1–G49 lie on the Cytoplasmic side of the membrane. Residues L50–D72 form a helical membrane-spanning segment. At F73–R81 the chain is on the lumenal side. The chain crosses the membrane as a helical span at residues P82–F104. Residues R105–N199 are Cytoplasmic-facing.

Belongs to the SPCS2 family. As to quaternary structure, component of the signal peptidase complex (SPC) composed of a catalytic subunit twr/SEC11 and three accessory subunits Spase12/SPCS1, Spase25/SPCS2 and Spase22-23/SPCS3. The complex induces a local thinning of the ER membrane which is used to measure the length of the signal peptide (SP) h-region of protein substrates. This ensures the selectivity of the complex towards h-regions shorter than 18-20 amino acids.

Its subcellular location is the endoplasmic reticulum membrane. In terms of biological role, component of the signal peptidase complex (SPC) which catalyzes the cleavage of N-terminal signal sequences from nascent proteins as they are translocated into the lumen of the endoplasmic reticulum. Enhances the enzymatic activity of SPC and facilitates the interactions between different components of the translocation site. The sequence is that of Signal peptidase complex subunit 2 (Spase25) from Drosophila melanogaster (Fruit fly).